Here is a 250-residue protein sequence, read N- to C-terminus: 2,3-bisphosphoglycerate-dependent phosphoglycerate mutase (250 aa).

Residues 8–15 (RHGESQWN), 21–22 (TG), Arg-60, 87–90 (ERHY), Lys-98, 114–115 (RR), and 183–184 (GN) each bind substrate. Residue His-9 is the Tele-phosphohistidine intermediate of the active site. The active-site Proton donor/acceptor is the Glu-87.

Belongs to the phosphoglycerate mutase family. BPG-dependent PGAM subfamily. In terms of assembly, homodimer.

It catalyses the reaction (2R)-2-phosphoglycerate = (2R)-3-phosphoglycerate. The protein operates within carbohydrate degradation; glycolysis; pyruvate from D-glyceraldehyde 3-phosphate: step 3/5. Functionally, catalyzes the interconversion of 2-phosphoglycerate and 3-phosphoglycerate. In Bordetella pertussis (strain Tohama I / ATCC BAA-589 / NCTC 13251), this protein is 2,3-bisphosphoglycerate-dependent phosphoglycerate mutase.